The primary structure comprises 557 residues: CTP synthase (557 aa).

The segment at 1 to 272 (MARSKIVKHI…DSLVLKKLML (272 aa)) is amidoligase domain. Ser18 is a binding site for CTP. Ser18 is a binding site for UTP. 19-24 (SLGKGI) serves as a coordination point for ATP. L-glutamine is bound at residue Tyr59. An ATP-binding site is contributed by Asp76. Residues Asp76 and Glu146 each contribute to the Mg(2+) site. Residues 153–155 (DIE), 193–198 (KTKPTQ), and Lys229 contribute to the CTP site. UTP is bound by residues 193–198 (KTKPTQ) and Lys229. One can recognise a Glutamine amidotransferase type-1 domain in the interval 299–543 (EIGVCGKYTK…VAEAKKFRDE (245 aa)). Residue Gly363 participates in L-glutamine binding. The active-site Nucleophile; for glutamine hydrolysis is Cys390. L-glutamine-binding positions include 391 to 394 (LGMQ), Glu414, and Arg471. Residues His516 and Glu518 contribute to the active site.

This sequence belongs to the CTP synthase family. As to quaternary structure, homotetramer.

The enzyme catalyses UTP + L-glutamine + ATP + H2O = CTP + L-glutamate + ADP + phosphate + 2 H(+). The catalysed reaction is L-glutamine + H2O = L-glutamate + NH4(+). It carries out the reaction UTP + NH4(+) + ATP = CTP + ADP + phosphate + 2 H(+). It functions in the pathway pyrimidine metabolism; CTP biosynthesis via de novo pathway; CTP from UDP: step 2/2. Its activity is regulated as follows. Allosterically activated by GTP, when glutamine is the substrate; GTP has no effect on the reaction when ammonia is the substrate. The allosteric effector GTP functions by stabilizing the protein conformation that binds the tetrahedral intermediate(s) formed during glutamine hydrolysis. Inhibited by the product CTP, via allosteric rather than competitive inhibition. In terms of biological role, catalyzes the ATP-dependent amination of UTP to CTP with either L-glutamine or ammonia as the source of nitrogen. Regulates intracellular CTP levels through interactions with the four ribonucleotide triphosphates. The protein is CTP synthase of Chloroherpeton thalassium (strain ATCC 35110 / GB-78).